The primary structure comprises 350 residues: Glucose-6-phosphate 3-dehydrogenase (350 aa).

Belongs to the Gfo/Idh/MocA family.

The enzyme catalyses D-glucose 6-phosphate + NAD(+) = 3-dehydro-D-glucose 6-phosphate + NADH + H(+). Its pathway is antibiotic biosynthesis; kanosamine biosynthesis. Functionally, involved in the biosynthesis of kanosamine (3-amino-3-deoxy-D-glucose), which is known to have antibiotic and antifungal properties, and to be a precursor of the antibiotic neotrehalosadiamine (3,3'-diamino-3,3'-dideoxy-alpha,beta-trehalose (NTD)). Catalyzes the oxidation of glucose 6-phosphate to 3-oxo-D-glucose 6-phosphate. It can only use NAD. The polypeptide is Glucose-6-phosphate 3-dehydrogenase (ntdC) (Bacillus subtilis (strain 168)).